Consider the following 167-residue polypeptide: Peptide deformylase (167 aa).

Fe cation is bound by residues Cys-91 and His-133. The active site involves Glu-134. Residue His-137 coordinates Fe cation.

The protein belongs to the polypeptide deformylase family. Requires Fe(2+) as cofactor.

It catalyses the reaction N-terminal N-formyl-L-methionyl-[peptide] + H2O = N-terminal L-methionyl-[peptide] + formate. Functionally, removes the formyl group from the N-terminal Met of newly synthesized proteins. Requires at least a dipeptide for an efficient rate of reaction. N-terminal L-methionine is a prerequisite for activity but the enzyme has broad specificity at other positions. The protein is Peptide deformylase of Neisseria meningitidis serogroup C (strain 053442).